Here is a 510-residue protein sequence, read N- to C-terminus: MFIENFKVESPNVKYTESEIHSVYDYQTTELVHDEKNGTYQWTVKPKTVKYEFKTDVHVPKLGVMLVGWGGNNGSTLTGGVIANREGISWATKDKVQQANYFGSLTQASTIRVGSFNGEEIYAPFKSLLPMVNPDDVVFGGWDISDMNLADAMARAKVFDIDLQKQLRPYMESMVPLPGIYDPDFIAANQGSRANNVIKGTKKEQIDQIIKDIREFKEKNKVDKVVVLWTANTERYSNVVVGLNDTMENLFASVDRNEAEISPSTLYAIACILENVPFINGSPQNTFVPGLIDLAIKKNTLIGGDDFKSGQTKMKSVLVDFLVGAGIKPTSIVSYNHLGNNDGMNLSAPQTFRSKEISKSNVVDDMVSSNAILYEPGEHPDHVVVIKYVPYVGDSKRAMDEYTSEIFMGGKNTIVLHNTCEDSLLAAPIILDLVLLAELSTRIQLKAEGEGKFHSFHPVATILSYLTKAPLVPPGTPVVNALSKQRAMLENILRACVGLAPENNMILEYK.

The NAD(+) site is built by glycine 70, glycine 71, asparagine 72, asparagine 73, aspartate 143, isoleucine 180, glutamine 190, arginine 193, threonine 230, alanine 231, asparagine 232, threonine 233, glycine 281, serine 282, aspartate 306, serine 309, asparagine 340, asparagine 341, aspartate 342, lysine 355, glycine 393, aspartate 394, aspartate 422, and serine 423.

The protein belongs to the myo-inositol 1-phosphate synthase family. NAD(+) serves as cofactor.

The protein localises to the cytoplasm. It is found in the cytosol. It localises to the nucleus. It carries out the reaction D-glucose 6-phosphate = 1D-myo-inositol 3-phosphate. It functions in the pathway polyol metabolism; myo-inositol biosynthesis; myo-inositol from D-glucose 6-phosphate: step 1/2. Functionally, key enzyme in myo-inositol biosynthesis pathway that catalyzes the conversion of glucose 6-phosphate to 1-myo-inositol 1-phosphate in a NAD-dependent manner. This chain is Inositol-3-phosphate synthase (INPS1), found in Nicotiana paniculata.